Reading from the N-terminus, the 503-residue chain is GMP synthase [glutamine-hydrolyzing] (503 aa).

The region spanning 3–189 (PVLVVDFGSQ…AFLSSFAAPN (187 aa)) is the Glutamine amidotransferase type-1 domain. The active-site Nucleophile is the C80. Active-site residues include H165 and E167. Positions 190–380 (WDPEQTICGT…LGIPKHIVHR (191 aa)) constitute a GMPS ATP-PPase domain. ATP is bound at residue 217–223 (SGGVDSV).

In terms of assembly, homodimer.

The enzyme catalyses XMP + L-glutamine + ATP + H2O = GMP + L-glutamate + AMP + diphosphate + 2 H(+). It functions in the pathway purine metabolism; GMP biosynthesis; GMP from XMP (L-Gln route): step 1/1. Functionally, catalyzes the synthesis of GMP from XMP. This Tropheryma whipplei (strain TW08/27) (Whipple's bacillus) protein is GMP synthase [glutamine-hydrolyzing].